The following is a 454-amino-acid chain: UDP-N-acetylmuramoylalanine--D-glutamate ligase (454 aa).

Position 117-123 (117-123) interacts with ATP; that stretch reads GTNGKTT.

Belongs to the MurCDEF family.

It localises to the cytoplasm. The catalysed reaction is UDP-N-acetyl-alpha-D-muramoyl-L-alanine + D-glutamate + ATP = UDP-N-acetyl-alpha-D-muramoyl-L-alanyl-D-glutamate + ADP + phosphate + H(+). The protein operates within cell wall biogenesis; peptidoglycan biosynthesis. Cell wall formation. Catalyzes the addition of glutamate to the nucleotide precursor UDP-N-acetylmuramoyl-L-alanine (UMA). The protein is UDP-N-acetylmuramoylalanine--D-glutamate ligase of Alkaliphilus oremlandii (strain OhILAs) (Clostridium oremlandii (strain OhILAs)).